A 317-amino-acid chain; its full sequence is MNQSPPGIIFNIQRFTIHDGPGLRTELFLKGCPLRCEWCSNPESFMPYAQVGVYKTKCISYKKCAACEETCPQENILQFTRGKLTSIERHDCTNCLACHNACPSDAIKLWGKSMSVEECMEEIRKDKGYYERSGGGVTVSGGEPLLQSEFVAKLFQACRSEGIQTCLESSLYVPWKKVQNVLPYTDLIISDIKHMDPEIHKKYTKVSNDKILKNLIKLTAEKRNIILRIPVIPNVNDDMVNIESTADFILNELGGKIRTLQLLSFMRLGEEKYTALGLPYKMKNVKVNRRSFQKHIQMLAEYFNQRGIHCVVGTKEK.

The region spanning 18-306 (HDGPGLRTEL…QMLAEYFNQR (289 aa)) is the Radical SAM core domain. The [4Fe-4S] cluster site is built by Cys32, Cys36, Cys39, Cys58, Cys64, Cys67, Cys71, Cys92, Cys95, Cys98, and Cys102. 38–40 (WCS) contributes to the S-adenosyl-L-methionine binding site. 4Fe-4S ferredoxin-type domains lie at 49-82 (AQVG…FTRG) and 83-112 (KLTS…LWGK). S-adenosyl-L-methionine contacts are provided by residues Gly142 and 191 to 193 (DIK).

Belongs to the organic radical-activating enzymes family. [4Fe-4S] cluster serves as cofactor.

It catalyses the reaction glycyl-[protein] + reduced [flavodoxin] + S-adenosyl-L-methionine = glycin-2-yl radical-[protein] + semiquinone [flavodoxin] + 5'-deoxyadenosine + L-methionine + H(+). It participates in organosulfur degradation; alkanesulfonate degradation. Functionally, involved in the degradation of the organosulfur compound 2(S)-dihydroxypropanesulfonate (DHPS). Catalyzes activation of the (2S)-3-sulfopropanediol dehydratase HpfG under anaerobic conditions by generation of an organic free radical on a glycine residue. This chain is (2S)-3-sulfopropanediol dehydratase activating enzyme, found in Klebsiella oxytoca.